We begin with the raw amino-acid sequence, 438 residues long: Putative ZDHHC-type palmitoyltransferase 7 (438 aa).

Residues N12 and N13 are each glycosylated (N-linked (GlcNAc...) asparagine). 2 helical membrane-spanning segments follow: residues 48–68 and 77–97; these read IFCLVHFIVYCVIIFRKGTIL and YFYLIWTHCVFFFAIGTYFLI. N119, N144, and N157 each carry an N-linked (GlcNAc...) asparagine glycan. Residues 183–239 are disordered; that stretch reads EDSINDDTITTTTTTTTTTSTSTIPEISNDDDDNNNENNNDNVNNRNNNNSNGEKED. Composition is skewed to low complexity over residues 190–206 and 218–234; these read TITTTTTTTTTTSTSTI and NENNNDNVNNRNNNNSN. N231 is a glycosylation site (N-linked (GlcNAc...) asparagine). One can recognise a DHHC domain in the interval 249–299; sequence YFCKKCLVDIPLRTKHCVKCNRCVLKYDHHCVFIGGCVGLNNHKNFLLFLL. 2 helical membrane-spanning segments follow: residues 294-314 and 330-350; these read FLLFLLAESLLLLLGLRIIVT and IAIIPPTLLIFGGLCMPFALF. N360 carries an N-linked (GlcNAc...) asparagine glycan.

It belongs to the DHHC palmitoyltransferase family.

It is found in the membrane. The catalysed reaction is L-cysteinyl-[protein] + hexadecanoyl-CoA = S-hexadecanoyl-L-cysteinyl-[protein] + CoA. The protein is Putative ZDHHC-type palmitoyltransferase 7 of Dictyostelium discoideum (Social amoeba).